A 499-amino-acid polypeptide reads, in one-letter code: MKMLNPQKPRLERRIAGSTNRWRFPRQPFSGDLLGLSQMCKAANIDFDEVLKNPDRLCISQIQKIFPENLKNKTIQSREADVILECLGFKWELHQPQLFQSETLAKLYLMGLARGNANPEKESVKILQAQQPGRSREQRPVKINDPLVTREAFATALKNLYMQEVKICLDDVLGVLAAAHILQFGSLFQRCVTVMMSGLTPSTIKNFYLAGCKYKEEPLTTACEKWMEMNLVPLVGTQIHLRKIPKELLHKVLKSPRLFTFSEFDLLKTLLLWVYLQLNNKTQTFPMYQTVLMFFSSFPKNCAFLDRDVGQNLIPLFLCLRLHSITKGKDLEELRHINFFPESWLVRVTANHYHALENGGDMAHVKDLSTQAVRFGRLFNQEYTTHSKVITLYGFFFEIKGIKHDTTSYSFHMQRIRHTDLECASTVYENTPISLRAERLVTYEIRAQTTVDGKWQEFRTNQITQKFGLAEPSCKSHALKIQTVGIPIYASFSFVFSLS.

The region spanning 143-199 (INDPLVTREAFATALKNLYMQEVKICLDDVLGVLAAAHILQFGSLFQRCVTVMMSGL) is the BTB domain.

This Bos taurus (Bovine) protein is BTB/POZ domain-containing protein 16 (BTBD16).